Reading from the N-terminus, the 236-residue chain is Small ribosomal subunit protein uS2 (236 aa).

The protein belongs to the universal ribosomal protein uS2 family.

This is Small ribosomal subunit protein uS2 from Brevibacillus brevis (strain 47 / JCM 6285 / NBRC 100599).